Consider the following 204-residue polypeptide: Allatotropin (204 aa).

The first 20 residues, 1–20, serve as a signal peptide directing secretion; that stretch reads MNLTMQLAVIVAVCLCLAEG. Residues 21-35 constitute a propeptide that is removed on maturation; sequence APDVRLTRTKQQRPT. Residues 47-83 are disordered; it reads RGFGKRDRPHPRAERDVDHQAPSARPNRGTPTFKSPT. Position 49 is a phenylalanine amide (phenylalanine 49). A compositionally biased stretch (basic and acidic residues) spans 50-65; the sequence is GKRDRPHPRAERDVDH. A propeptide spanning residues 53 to 204 is cleaved from the precursor; it reads DRPHPRAERD…LSSEELLRNF (152 aa).

Expressed extensively in the brain, frontal ganglion and terminal ganglion of the day 2 fifth instar larva (at protein level). Not expressed in the larval brain after day 4 of the fifth instar, or in the brain of the pupa or adult. Expression in the terminal ganglion is localized to cells in the posterior portion of the seventh neuromere of day 2 fifth instar larvae. In the pupa and adult expression is detected in the medial region of neuromere 6, the dorsal medial region of neuromere 7, and the posterior neuromere of the terminal ganglion (at protein level). In the frontal ganglion expression decreases in the wandering larvae and is present at low levels in during pupal ecdysis, but is not detected in the adult. Expressed in the subesophageal ganglion of day 2 fifth instar larva, but not at any time before or after day 2. Not expressed in the abdominal ganglia 1-6 of the day 2 fifth instar larva (at protein level). Expressed in the anterior neuromeres of the pterothoracic ganglion in pupa but not in adult (at protein level). Expressed in the unfused abdominal ganglia of day 10 pupae, and in pharate adult is expressed in median neurosecretory cells M1, M2 and M5, but not in median neurosecretory cells M3 and M4 (at protein level). Not expressed in the differentiated median neurosecretory cells M5 of the larva (at protein level). In the pharate adult brain isoform 3 is the predominant form, with lower levels of isoform 2 and very low levels of isoform 1 detected. In the pharate adult nerve cord isoform 3 is the predominant form, with lower levels of isoform 2 and no isoform 1 detected. In the pharate adult frontal ganglion isoform 3 is expressed, but not isoform 1 and isoform 2.

It localises to the secreted. Neuropeptide stimulator of juvenile hormone synthesis. Cardioregulatory neurohormone that increases heart beat rate in the adult but not in the larva. Inhibits active ion transport in the midgut of feeding fourth instar and day 2 fifth instar larva, but not in the midgut of pharate or wandering fifth instar larva. This Manduca sexta (Tobacco hawkmoth) protein is Allatotropin.